Reading from the N-terminus, the 170-residue chain is Adenine phosphoribosyltransferase (170 aa).

Belongs to the purine/pyrimidine phosphoribosyltransferase family. As to quaternary structure, homodimer.

It localises to the cytoplasm. It catalyses the reaction AMP + diphosphate = 5-phospho-alpha-D-ribose 1-diphosphate + adenine. The protein operates within purine metabolism; AMP biosynthesis via salvage pathway; AMP from adenine: step 1/1. In terms of biological role, catalyzes a salvage reaction resulting in the formation of AMP, that is energically less costly than de novo synthesis. This is Adenine phosphoribosyltransferase from Halothermothrix orenii (strain H 168 / OCM 544 / DSM 9562).